The primary structure comprises 188 residues: HTH-type transcriptional repressor AcnR (188 aa).

The 61-residue stretch at 10 to 70 folds into the HTH tetR-type domain; it reads TNSRQEILEG…ALAREDAARM (61 aa). Residues 33–52 constitute a DNA-binding region (H-T-H motif); sequence TVRRLEEATGKSRGAIFHHF. Citrate-binding positions include 79–80, R130, and N134; that span reads LV. Position 181 (E181) interacts with Mg(2+). R185 is a citrate binding site.

Homodimer.

Its function is as follows. AcnR negatively controls the expression of the aconitase gene acn. Binds to the imperfect inverted repeat in the acn promoter region. This chain is HTH-type transcriptional repressor AcnR, found in Corynebacterium glutamicum (strain ATCC 13032 / DSM 20300 / JCM 1318 / BCRC 11384 / CCUG 27702 / LMG 3730 / NBRC 12168 / NCIMB 10025 / NRRL B-2784 / 534).